The primary structure comprises 279 residues: Type III pantothenate kinase (279 aa).

6–13 (DIGNTLSK) is an ATP binding site. Substrate is bound by residues tyrosine 92 and 99 to 102 (GVDR). Aspartate 101 serves as the catalytic Proton acceptor. A K(+)-binding site is contributed by aspartate 120. ATP is bound at residue serine 123. A substrate-binding site is contributed by threonine 177.

This sequence belongs to the type III pantothenate kinase family. In terms of assembly, homodimer. NH4(+) serves as cofactor. K(+) is required as a cofactor.

It is found in the cytoplasm. The enzyme catalyses (R)-pantothenate + ATP = (R)-4'-phosphopantothenate + ADP + H(+). It participates in cofactor biosynthesis; coenzyme A biosynthesis; CoA from (R)-pantothenate: step 1/5. Its function is as follows. Catalyzes the phosphorylation of pantothenate (Pan), the first step in CoA biosynthesis. The sequence is that of Type III pantothenate kinase from Chromohalobacter salexigens (strain ATCC BAA-138 / DSM 3043 / CIP 106854 / NCIMB 13768 / 1H11).